The sequence spans 1324 residues: Tetratricopeptide repeat protein 21 homolog (1324 aa).

TPR repeat units lie at residues proline 58–alanine 91, serine 414–methionine 446, serine 582–glutamate 615, aspartate 669–phenylalanine 702, proline 737–aspartate 770, glutamine 772–lysine 804, methionine 806–proline 837, isoleucine 847–isoleucine 880, alanine 894–aspartate 927, lysine 929–asparagine 961, glutamate 963–histidine 995, histidine 997–cysteine 1029, serine 1033–tryptophan 1066, glutamate 1205–cysteine 1238, lysine 1240–arginine 1272, and proline 1274–tyrosine 1307.

The protein belongs to the TTC21 family. In terms of assembly, component of the IFT complex A (IFT-A) composed of at least che-11, daf-10, dyf-2, ift-139, ift-43 and ifta-1. Expressed in ciliated sensory neurons in the head and tail.

Its subcellular location is the cell projection. It is found in the cilium. The protein resides in the cytoplasm. The protein localises to the cytoskeleton. It localises to the cilium basal body. Its subcellular location is the dendrite. Component of the IFT complex A (IFT-A), a complex required for retrograde ciliary transport. In particular, may act redundantly with the intraflagellar transport protein ift-43 to regulate the transport of specific ciliary cargo proteins such as che-3 which are related to motility. Functions in cilia biogenesis. This is Tetratricopeptide repeat protein 21 homolog from Caenorhabditis elegans.